Consider the following 526-residue polypeptide: Peptide chain release factor 3 (526 aa).

Positions 8-277 constitute a tr-type G domain; the sequence is NKRRTFAIIS…GLTQWAPAPQ (270 aa). GTP-binding positions include 17 to 24, 85 to 89, and 139 to 142; these read SHPDAGKT, DTPGH, and NKLD.

It belongs to the TRAFAC class translation factor GTPase superfamily. Classic translation factor GTPase family. PrfC subfamily.

It is found in the cytoplasm. In terms of biological role, increases the formation of ribosomal termination complexes and stimulates activities of RF-1 and RF-2. It binds guanine nucleotides and has strong preference for UGA stop codons. It may interact directly with the ribosome. The stimulation of RF-1 and RF-2 is significantly reduced by GTP and GDP, but not by GMP. This Histophilus somni (strain 129Pt) (Haemophilus somnus) protein is Peptide chain release factor 3.